The chain runs to 1003 residues: MGMRPPARMPKLTRRSRVLIGVALAAVVLLLIGPRFIDTYVNWLWFGELGYRSVFTTVLLTRVVVFLVVSLLIGAIVFAGLALAYRTRPVFVPTAGPNDPIARYRTTVMARLRLFGFGVPAFIGILSGIVAQSYWVRIQLFLHGGEFGVTDPQFGLDLGFYAFDLPFYRLVLSYLFVATFLAFIANLLGHYLFGGIRLTGRNGALTRSARIQLVTLVGILILLKAFAYWLDRYELLSHTRGGKPFTGAGYTDINAVLPAKLILLAIAVICAVAVFSAIVLRDLRIPAIGVVLLLLSSLVVGAGWPLVVEQFSVKPNAAQKESEYISRSIAATRQAYGLTDEVVTYRDYPGNAPATAQQVAADRSTTSNIRVLDPNIVSPAFTQFQQGKNFYFFPEQLAMDRYRDADGNLRDYVVAARELNPDRLIDNQRDWINRHTVYTHGNGFIASPANTVRGIANDPNQNGGYPEFLASVVGANGAVVSPGPAPLDQPRIYFGPVIANTASDYAIVGENGTPREYDYENNVETRNYTYTGSGGVPIGNWLTRSLFAAKFAERNFLFSNVIGENSKILFNRDPADRVEAVAPWLTTDTTVYPAIVNKKIVWIVDGYTTLDNYPYSELTSLSSATADSNEVAVNRLALNKQVSYIRNSVKATVDAYDGTVTLYAQDETDPVLQAWMKVFPDTIKPKSEISPELQQHLRYPEDLFKVQRALLAKYHVDDPVTFFSTSDFWDVPLDPNPTASSFQPPYYIVAKDLAENNNSAAFQLTSAMNRFRRDFLAAYMSASSDPETYGKITVLTIPGQVNGPKLAFNAISTDTAVSQDLGVIGRDNQNRIRWGNLLTLPVGPGGLLYVAPVYASPGTSDAASTYPRLIRVAMFYNDQVGYGPTVRDALTDLFGAGADATATGPAPANLPDGQPAAQPPNGQQPAAQTPGNQAGRAPTPPPAAIPSGPSGPQQLSEAKAAALQEVQEAMSGLQDAQRSGNFAEYGEALQRLDDAMNRYSEAR.

7 helical membrane-spanning segments follow: residues 18-38 (VLIG…RFID), 63-83 (VVVF…GLAL), 114-134 (LFGF…AQSY), 176-196 (FVAT…FGGI), 211-231 (IQLV…YWLD), 260-280 (KLIL…AIVL), and 288-308 (IGVV…PLVV). The span at 902–937 (ATGPAPANLPDGQPAAQPPNGQQPAAQTPGNQAGRA) shows a compositional bias: low complexity. The disordered stretch occupies residues 902-979 (ATGPAPANLP…MSGLQDAQRS (78 aa)).

This sequence belongs to the UPF0182 family.

The protein resides in the cell membrane. The chain is UPF0182 protein Mkms_1433 from Mycobacterium sp. (strain KMS).